A 320-amino-acid polypeptide reads, in one-letter code: Biotin synthase (320 aa).

Residues 45-274 (NDLQKASLLS…DSRIRLSAGR (230 aa)) enclose the Radical SAM core domain. Cys-60, Cys-64, and Cys-67 together coordinate [4Fe-4S] cluster. The [2Fe-2S] cluster site is built by Cys-105, Cys-137, Cys-197, and Arg-269.

This sequence belongs to the radical SAM superfamily. Biotin synthase family. In terms of assembly, homodimer. Requires [4Fe-4S] cluster as cofactor. [2Fe-2S] cluster serves as cofactor.

The enzyme catalyses (4R,5S)-dethiobiotin + (sulfur carrier)-SH + 2 reduced [2Fe-2S]-[ferredoxin] + 2 S-adenosyl-L-methionine = (sulfur carrier)-H + biotin + 2 5'-deoxyadenosine + 2 L-methionine + 2 oxidized [2Fe-2S]-[ferredoxin]. It participates in cofactor biosynthesis; biotin biosynthesis; biotin from 7,8-diaminononanoate: step 2/2. Catalyzes the conversion of dethiobiotin (DTB) to biotin by the insertion of a sulfur atom into dethiobiotin via a radical-based mechanism. The protein is Biotin synthase of Beijerinckia indica subsp. indica (strain ATCC 9039 / DSM 1715 / NCIMB 8712).